The primary structure comprises 183 residues: Nucleoside triphosphate pyrophosphatase (183 aa).

Aspartate 71 serves as the catalytic Proton acceptor.

Belongs to the Maf family. It depends on a divalent metal cation as a cofactor.

The protein resides in the cytoplasm. The catalysed reaction is a ribonucleoside 5'-triphosphate + H2O = a ribonucleoside 5'-phosphate + diphosphate + H(+). It carries out the reaction a 2'-deoxyribonucleoside 5'-triphosphate + H2O = a 2'-deoxyribonucleoside 5'-phosphate + diphosphate + H(+). Nucleoside triphosphate pyrophosphatase. May have a dual role in cell division arrest and in preventing the incorporation of modified nucleotides into cellular nucleic acids. The chain is Nucleoside triphosphate pyrophosphatase from Campylobacter jejuni subsp. jejuni serotype O:6 (strain 81116 / NCTC 11828).